The chain runs to 498 residues: ATP synthase subunit beta, chloroplastic (498 aa).

172-179 serves as a coordination point for ATP; sequence GGAGVGKT.

Belongs to the ATPase alpha/beta chains family. In terms of assembly, F-type ATPases have 2 components, CF(1) - the catalytic core - and CF(0) - the membrane proton channel. CF(1) has five subunits: alpha(3), beta(3), gamma(1), delta(1), epsilon(1). CF(0) has four main subunits: a(1), b(1), b'(1) and c(9-12).

The protein resides in the plastid. It localises to the chloroplast thylakoid membrane. The catalysed reaction is ATP + H2O + 4 H(+)(in) = ADP + phosphate + 5 H(+)(out). Functionally, produces ATP from ADP in the presence of a proton gradient across the membrane. The catalytic sites are hosted primarily by the beta subunits. The chain is ATP synthase subunit beta, chloroplastic from Nicotiana sp. (Tobacco).